The chain runs to 315 residues: Pantothenate kinase (315 aa).

94 to 101 (GSVAVGKS) is a binding site for ATP.

Belongs to the prokaryotic pantothenate kinase family.

Its subcellular location is the cytoplasm. It catalyses the reaction (R)-pantothenate + ATP = (R)-4'-phosphopantothenate + ADP + H(+). It functions in the pathway cofactor biosynthesis; coenzyme A biosynthesis; CoA from (R)-pantothenate: step 1/5. This chain is Pantothenate kinase, found in Citrobacter koseri (strain ATCC BAA-895 / CDC 4225-83 / SGSC4696).